The primary structure comprises 123 residues: Large ribosomal subunit protein bL12 (123 aa).

It belongs to the bacterial ribosomal protein bL12 family. Homodimer. Part of the ribosomal stalk of the 50S ribosomal subunit. Forms a multimeric L10(L12)X complex, where L10 forms an elongated spine to which 2 to 4 L12 dimers bind in a sequential fashion. Binds GTP-bound translation factors.

Functionally, forms part of the ribosomal stalk which helps the ribosome interact with GTP-bound translation factors. Is thus essential for accurate translation. This Bacillus licheniformis (strain ATCC 14580 / DSM 13 / JCM 2505 / CCUG 7422 / NBRC 12200 / NCIMB 9375 / NCTC 10341 / NRRL NRS-1264 / Gibson 46) protein is Large ribosomal subunit protein bL12.